A 62-amino-acid chain; its full sequence is Large ribosomal subunit protein bL28 (62 aa).

It belongs to the bacterial ribosomal protein bL28 family.

This Ruminiclostridium cellulolyticum (strain ATCC 35319 / DSM 5812 / JCM 6584 / H10) (Clostridium cellulolyticum) protein is Large ribosomal subunit protein bL28.